The primary structure comprises 261 residues: Type III pantothenate kinase (261 aa).

6 to 13 (DVGNTNTV) serves as a coordination point for ATP. 107–110 (GADR) is a binding site for substrate. Asp109 (proton acceptor) is an active-site residue. Asp129 serves as a coordination point for K(+). Thr132 contacts ATP. A substrate-binding site is contributed by Thr183.

This sequence belongs to the type III pantothenate kinase family. Homodimer. NH4(+) serves as cofactor. It depends on K(+) as a cofactor.

It is found in the cytoplasm. It carries out the reaction (R)-pantothenate + ATP = (R)-4'-phosphopantothenate + ADP + H(+). It participates in cofactor biosynthesis; coenzyme A biosynthesis; CoA from (R)-pantothenate: step 1/5. Functionally, catalyzes the phosphorylation of pantothenate (Pan), the first step in CoA biosynthesis. This is Type III pantothenate kinase from Kosmotoga olearia (strain ATCC BAA-1733 / DSM 21960 / TBF 19.5.1).